The following is a 311-amino-acid chain: Malate dehydrogenase (311 aa).

NAD(+)-binding positions include 7–13 (GAAGGIG) and Asp-34. Substrate-binding residues include Arg-81 and Arg-87. Residues Asn-94 and 117–119 (ITN) contribute to the NAD(+) site. Residues Asn-119 and Arg-153 each coordinate substrate. The active-site Proton acceptor is His-177. Residue Met-227 coordinates NAD(+).

It belongs to the LDH/MDH superfamily. MDH type 1 family. Homodimer.

The catalysed reaction is (S)-malate + NAD(+) = oxaloacetate + NADH + H(+). Its function is as follows. Catalyzes the reversible oxidation of malate to oxaloacetate. The chain is Malate dehydrogenase from Histophilus somni (strain 129Pt) (Haemophilus somnus).